A 134-amino-acid chain; its full sequence is Large ribosomal subunit protein bL17 (134 aa).

This sequence belongs to the bacterial ribosomal protein bL17 family. As to quaternary structure, part of the 50S ribosomal subunit. Contacts protein L32.

The protein is Large ribosomal subunit protein bL17 of Anaplasma marginale (strain Florida).